A 161-amino-acid chain; its full sequence is uncharacterized protein (161 aa).

A helical membrane pass occupies residues 5–25; the sequence is GPTLLSLLAALLVSLGLLLWY.

This sequence belongs to the IIV-6 203L/325L family.

The protein localises to the membrane. This is an uncharacterized protein from Invertebrate iridescent virus 3 (IIV-3).